Here is a 331-residue protein sequence, read N- to C-terminus: Protein RecA (331 aa).

66–73 (GPESSGKT) serves as a coordination point for ATP.

This sequence belongs to the RecA family.

Its subcellular location is the cytoplasm. Functionally, can catalyze the hydrolysis of ATP in the presence of single-stranded DNA, the ATP-dependent uptake of single-stranded DNA by duplex DNA, and the ATP-dependent hybridization of homologous single-stranded DNAs. It interacts with LexA causing its activation and leading to its autocatalytic cleavage. This chain is Protein RecA, found in Lactobacillus delbrueckii subsp. bulgaricus (strain ATCC 11842 / DSM 20081 / BCRC 10696 / JCM 1002 / NBRC 13953 / NCIMB 11778 / NCTC 12712 / WDCM 00102 / Lb 14).